We begin with the raw amino-acid sequence, 1242 residues long: Structural polyprotein (1242 aa).

Residues 14 to 101 form a disordered region; that stretch reads WRPRMPPRPW…PKRKPGRRER (88 aa). Residues 26-42 show a composition bias toward low complexity; the sequence is RMPTMQRPDQQARQMQQ. Residues 35-66 form a host transcription inhibition region; sequence QQARQMQQLIAAVSTLALRQNAAAPQRGKKKQ. Positions 59–96 match the Nuclear localization signal motif; sequence PQRGKKKQPRRKKPKPQPEKPKKQEQKPKQKKAPKRKP. Residues 61 to 73 are compositionally biased toward basic residues; the sequence is RGKKKQPRRKKPK. Over residues 74-86 the composition is skewed to basic and acidic residues; it reads PQPEKPKKQEQKP. The binding to the viral RNA stretch occupies residues 82 to 111; that stretch reads QEQKPKQKKAPKRKPGRRERMCMKIEHDCI. The segment covering 87–98 has biased composition (basic residues); that stretch reads KQKKAPKRKPGR. The ribosome-binding stretch occupies residues 96-110; it reads PGRRERMCMKIEHDC. Cysteines 110 and 125 form a disulfide. One can recognise a Peptidase S3 domain in the interval 110-258; sequence CIFEVKHEGK…KITPEGTVEW (149 aa). H136 serves as the catalytic Charge relay system. The Nuclear export signal signature appears at 141-151; the sequence is IDNADLARLSY. An interaction with spike glycoprotein E2 region spans residues 152–157; the sequence is KKSSKY. D158 acts as the Charge relay system in catalysis. Residues 180–190 form a dimerization of the capsid protein region; sequence PEGHYNWHYGA. S210 acts as the Charge relay system in catalysis. Residues 216 to 220 form a dimerization of the capsid protein region; sequence DNKGP. The tract at residues 259-272 is functions as an uncleaved signal peptide for the precursor of protein E3/E2; it reads AASTVTAMCLLTNI. 8 disulfide bridges follow: C267–C276, C281–C285, C284–C316, C343–C449, C346–C352, C415–C429, C477–C589, and C527–C544. N271 is a glycosylation site (N-linked (GlcNAc...) asparagine; by host). Topologically, residues 325-690 are extracellular; that stretch reads STANHFNAYK…YYYGLHPTTT (366 aa). 2 interaction with host Mxra8 receptor regions span residues 350–353 and 386–388; these read HSCH and HDH. Interaction with host Mxra8 receptor stretches follow at residues 508 to 511 and 540 to 546; these read QSGN and TINSCTV. N586 is a glycosylation site (N-linked (GlcNAc...) asparagine; by host). A helical transmembrane segment spans residues 691 to 711; sequence IVVVIRVSVVVLLSFAASVYM. The Cytoplasmic segment spans residues 712–746; that stretch reads CVVARTKCLTPYALTPGAVVPVTIGVLCCAPKAHA. The tract at residues 714 to 718 is interaction with the capsid protein; sequence VARTK. 3 S-palmitoyl cysteine; by host lipidation sites follow: C719, C739, and C740. A transient transmembrane before p62-6K protein processing region spans residues 719-739; the sequence is CLTPYALTPGAVVPVTIGVLC. A disulfide bridge connects residues C719 and C740. Topologically, residues 747 to 761 are extracellular; sequence ASFAEGMAYLWDNNQ. N-linked (GlcNAc...) asparagine; by host glycosylation is present at N760. A helical transmembrane segment spans residues 762 to 782; it reads SMFWMELTGPLALLILATCCA. Residues 783–785 lie on the Cytoplasmic side of the membrane; that stretch reads RSL. Residues 786-806 form a helical membrane-spanning segment; sequence LSCCKGSFLVAMSIGSAVASA. The Extracellular segment spans residues 807 to 1217; it reads YEHTAIIPNQ…STAMTWAQHL (411 aa). Disulfide bonds link C855/C920, C868/C900, C869/C902, and C874/C884. The tract at residues 890–907 is E1 fusion peptide loop; it reads VYPFMWGGAYCFCDSENT. N-linked (GlcNAc...) asparagine; by host glycosylation is found at N947 and N1076. 4 disulfide bridges follow: C1065–C1077, C1107–C1180, C1112–C1184, and C1134–C1174. Residues 1218-1238 traverse the membrane as a helical segment; the sequence is AGGVGLLIALAVLILVIVTCV. C1237 carries S-palmitoyl cysteine; by host lipidation. Over 1239–1242 the chain is Cytoplasmic; the sequence is TLRR.

Homodimer. Homomultimer. Interacts with host karyopherin KPNA4; this interaction allows the nuclear import of the viral capsid protein. Interacts with spike glycoprotein E2. Interacts with host IRAK1; the interaction leads to inhibition of IRAK1-dependent signaling. In terms of assembly, the precursor of protein E3/E2 and E1 form a heterodimer shortly after synthesis. As to quaternary structure, the precursor of protein E3/E2 and E1 form a heterodimer shortly after synthesis. Processing of the precursor of protein E3/E2 into E2 and E3 results in a heterodimer of the spike glycoproteins E2 and E1. Spike at virion surface are constituted of a trimer of E2-E1 heterodimers. After target cell attachment and endocytosis, E1 change conformation to form homotrimers. Interacts with 6K protein. Interacts with spike glycoprotein E1. Processing of the precursor of protein E3/E2 into E2 and E3 results in a heterodimer of the spike glycoproteins E2 and E1. Spike at virion surface are constituted of a trimer of E2-E1 heterodimers. Interacts with 6K protein. Interacts with host MXRA8; this interaction mediates virus entry. In terms of assembly, oligomer. Interacts with spike glycoprotein E1. Interacts with spike glycoprotein E2. Post-translationally, structural polyprotein: Specific enzymatic cleavages in vivo yield mature proteins. Capsid protein is auto-cleaved during polyprotein translation, unmasking a signal peptide at the N-terminus of the precursor of E3/E2. The remaining polyprotein is then targeted to the host endoplasmic reticulum, where host signal peptidase cleaves it into pE2, 6K and E1 proteins. pE2 is further processed to mature E3 and E2 by host furin in trans-Golgi vesicle. In terms of processing, palmitoylated via thioester bonds. These palmitoylations may induce disruption of the C-terminus transmembrane. This would result in the reorientation of E2 C-terminus from lumenal to cytoplasmic side. N-glycosylated. Post-translationally, palmitoylated via thioester bonds.

It localises to the virion. The protein localises to the host cytoplasm. Its subcellular location is the host cell membrane. The protein resides in the host nucleus. It is found in the virion membrane. It localises to the host Golgi apparatus. The protein localises to the host trans-Golgi network. Its subcellular location is the host endoplasmic reticulum. The enzyme catalyses Autocatalytic release of the core protein from the N-terminus of the togavirus structural polyprotein by hydrolysis of a -Trp-|-Ser- bond.. Its function is as follows. Forms an icosahedral capsid with a T=4 symmetry composed of 240 copies of the capsid protein surrounded by a lipid membrane through which penetrate 80 spikes composed of trimers of E1-E2 heterodimers. The capsid protein binds to the viral RNA genome at a site adjacent to a ribosome binding site for viral genome translation following genome release. Possesses a protease activity that results in its autocatalytic cleavage from the nascent structural protein. Following its self-cleavage, the capsid protein transiently associates with ribosomes, and within several minutes the protein binds to viral RNA and rapidly assembles into icosahedric core particles. The resulting nucleocapsid eventually associates with the cytoplasmic domain of the spike glycoprotein E2 at the cell membrane, leading to budding and formation of mature virions. In case of infection, new virions attach to target cells and after clathrin-mediated endocytosis their membrane fuses with the host endosomal membrane. This leads to the release of the nucleocapsid into the cytoplasm, followed by an uncoating event necessary for the genomic RNA to become accessible. The uncoating might be triggered by the interaction of capsid proteins with ribosomes. Binding of ribosomes would release the genomic RNA since the same region is genomic RNA-binding and ribosome-binding. Specifically inhibits interleukin-1 receptor-associated kinase 1/IRAK1-dependent signaling during viral entry, representing a means by which the alphaviruses may evade innate immune detection and activation prior to viral gene expression. In terms of biological role, provides the signal sequence for the translocation of the precursor of protein E3/E2 to the host endoplasmic reticulum. Furin-cleaved E3 remains associated with spike glycoprotein E1 and mediates pH protection of the latter during the transport via the secretory pathway. After virion release from the host cell, the assembly protein E3 is gradually released in the extracellular space. Functionally, plays a role in viral attachment to target host cell, by binding to the cell receptor MXRA8. Synthesized as a p62 precursor which is processed by furin at the cell membrane just before virion budding, giving rise to E2-E1 heterodimer. The p62-E1 heterodimer is stable, whereas E2-E1 is unstable and dissociate at low pH. p62 is processed at the last step, presumably to avoid E1 fusion activation before its final export to cell surface. E2 C-terminus contains a transitory transmembrane that would be disrupted by palmitoylation, resulting in reorientation of the C-terminal tail from lumenal to cytoplasmic side. This step is critical since E2 C-terminus is involved in budding by interacting with capsid proteins. This release of E2 C-terminus in cytoplasm occurs lately in protein export, and precludes premature assembly of particles at the endoplasmic reticulum membrane. Acts as a viroporin that participates in virus glycoprotein processing and transport to the plasma membrane, cell permeabilization and budding of viral particles. Disrupts the calcium homeostasis of the cell, probably at the endoplasmic reticulum level. This leads to cytoplasmic calcium elevation. Because of its lipophilic properties, the 6K protein is postulated to influence the selection of lipids that interact with the transmembrane domains of the glycoproteins, which, in turn, affects the deformability of the bilayer required for the extreme curvature that occurs as budding proceeds. Present in low amount in virions, about 3% compared to viral glycoproteins. Its function is as follows. Class II viral fusion protein. Fusion activity is inactive as long as E1 is bound to E2 in mature virion. After virus attachment to target cell via host MXRA8 and endocytosis, acidification of the endosome induce dissociation of E1/E2 heterodimer and concomitant trimerization of the E1 subunits. This E1 trimer is fusion active, and promotes release of viral nucleocapsid in cytoplasm after endosome and viral membrane fusion. Efficient fusion requires the presence of cholesterol and sphingolipid in the target membrane. In Mayaro virus (strain Brazil) (MAYV), this protein is Structural polyprotein.